The following is a 435-amino-acid chain: Estrogen-related receptor gamma (435 aa).

The disordered stretch occupies residues 1–64 (MSNKDRHIDS…GLDSPPLYPS (64 aa)). Residues 10–29 (SSCSSFIKTEPSSPASLTDS) are compositionally biased toward polar residues. Low complexity predominate over residues 34–47 (SPGGSSDASGSYSS). The segment at residues 102–177 (KRLCLVCGDI…VGMLKEGVRL (76 aa)) is a DNA-binding region (nuclear receptor). 2 NR C4-type zinc fingers span residues 105-125 (CLVC…CEAC) and 141-160 (CPAT…CQAC). Residues 210-434 (PYNKIVSHLL…KLFSEMLEAK (225 aa)) enclose the NR LBD domain.

Belongs to the nuclear hormone receptor family. NR3 subfamily. As to quaternary structure, homodimer. Interacts with NRIP1, NCOA1 and NCOR2. Binds TLE1, PNRC1 and PNRC2. Binds GRIP1. Post-translationally, acetylated by PCAF/KAT2 (in vitro).

It is found in the nucleus. Its function is as follows. Orphan receptor that acts as a transcription activator in the absence of bound ligand. Binds specifically to an estrogen response element and activates reporter genes controlled by estrogen response elements. Induces the expression of PERM1 in the skeletal muscle. In Pongo abelii (Sumatran orangutan), this protein is Estrogen-related receptor gamma (ESRRG).